The following is a 103-amino-acid chain: Small ribosomal subunit protein uS10 (103 aa).

Belongs to the universal ribosomal protein uS10 family. In terms of assembly, part of the 30S ribosomal subunit.

In terms of biological role, involved in the binding of tRNA to the ribosomes. This is Small ribosomal subunit protein uS10 from Neisseria gonorrhoeae (strain ATCC 700825 / FA 1090).